The sequence spans 404 residues: Pectate lyase E (404 aa).

Residues 1-41 (MNNSRMSSVSTQKTTGRSALGTKSALAAIIATTMMVSVASA) form the signal peptide. Aspartate 182 and aspartate 225 together coordinate Ca(2+). Arginine 278 is an active-site residue.

The protein belongs to the polysaccharide lyase 1 family. PLBC subfamily. Ca(2+) serves as cofactor.

The protein localises to the secreted. The catalysed reaction is Eliminative cleavage of (1-&gt;4)-alpha-D-galacturonan to give oligosaccharides with 4-deoxy-alpha-D-galact-4-enuronosyl groups at their non-reducing ends.. The protein operates within glycan metabolism; pectin degradation; 2-dehydro-3-deoxy-D-gluconate from pectin: step 2/5. In terms of biological role, involved in maceration and soft-rotting of plant tissue. Pectate lyases have been implicated as pathogenicity factors which induce maceration or rotting of plant tissue. PelE is sufficient to induce these effects under laboratory conditions. The sequence is that of Pectate lyase E (pelE) from Dickeya chrysanthemi (Pectobacterium chrysanthemi).